Here is a 173-residue protein sequence, read N- to C-terminus: Large ribosomal RNA subunit accumulation protein YceD (173 aa).

Belongs to the DUF177 domain family.

In terms of biological role, plays a role in synthesis, processing and/or stability of 23S rRNA. This chain is Large ribosomal RNA subunit accumulation protein YceD (yceD), found in Escherichia coli O157:H7.